The following is a 198-amino-acid chain: FMN-dependent NADH:quinone oxidoreductase (198 aa).

FMN is bound at residue 92 to 95; the sequence is MWNL.

This sequence belongs to the azoreductase type 1 family. As to quaternary structure, homodimer. Requires FMN as cofactor.

The catalysed reaction is 2 a quinone + NADH + H(+) = 2 a 1,4-benzosemiquinone + NAD(+). It catalyses the reaction N,N-dimethyl-1,4-phenylenediamine + anthranilate + 2 NAD(+) = 2-(4-dimethylaminophenyl)diazenylbenzoate + 2 NADH + 2 H(+). Its function is as follows. Quinone reductase that provides resistance to thiol-specific stress caused by electrophilic quinones. Also exhibits azoreductase activity. Catalyzes the reductive cleavage of the azo bond in aromatic azo compounds to the corresponding amines. The chain is FMN-dependent NADH:quinone oxidoreductase from Lachnoclostridium phytofermentans (strain ATCC 700394 / DSM 18823 / ISDg) (Clostridium phytofermentans).